The chain runs to 571 residues: Zinc metalloproteinase-disintegrin-like jararhagin (571 aa).

The propeptide occupies 1–150; that stretch reads ATRPKGAVQP…KKASQLAFTA (150 aa). Glutamate 151 carries the pyrrolidone carboxylic acid (Glu) modification. Positions 159–355 constitute a Peptidase M12B domain; it reads KYIEFFVVVD…HNPECIINEP (197 aa). Residues glutamate 162 and aspartate 246 each contribute to the Ca(2+) site. 3 cysteine pairs are disulfide-bonded: cysteine 270-cysteine 350, cysteine 310-cysteine 334, and cysteine 312-cysteine 317. Histidine 295 lines the Zn(2+) pocket. Residue glutamate 296 is part of the active site. Positions 299 and 305 each coordinate Zn(2+). Asparagine 333 carries N-linked (GlcNAc...) asparagine glycosylation. The Ca(2+) site is built by cysteine 350, asparagine 353, valine 365, asparagine 368, leucine 370, glutamate 372, glutamate 375, and aspartate 378. The 87-residue stretch at 363–449 folds into the Disintegrin domain; sequence PPVCGNELLE…ECPADVFHKN (87 aa). 22 disulfides stabilise this stretch: cysteine 366-cysteine 385, cysteine 366-cysteine 395, cysteine 377-cysteine 390, cysteine 377-cysteine 395, cysteine 379-cysteine 385, cysteine 389-cysteine 412, cysteine 403-cysteine 409, cysteine 408-cysteine 434, cysteine 421-cysteine 441, cysteine 428-cysteine 453, cysteine 428-cysteine 460, cysteine 453-cysteine 465, cysteine 460-cysteine 465, cysteine 472-cysteine 487, cysteine 472-cysteine 522, cysteine 487-cysteine 533, cysteine 500-cysteine 510, cysteine 510-cysteine 517, cysteine 517-cysteine 559, cysteine 522-cysteine 533, cysteine 553-cysteine 564, and cysteine 559-cysteine 564. The short motif at 427–429 is the D/ECD-tripeptide element; the sequence is ECD. Ca(2+)-binding residues include aspartate 429, proline 430, glutamate 432, aspartate 444, and valine 445.

This sequence belongs to the venom metalloproteinase (M12B) family. P-III subfamily. P-IIIb sub-subfamily. Monomer (Jararhagin and Jararhagin-C) and dimer (Jaracetin). The cofactor is Zn(2+). The N-terminus of Jararhagin is blocked. Expressed by the venom gland.

Its subcellular location is the secreted. The enzyme catalyses Cleavage of 10-His-|-Leu-11, 14-Ala-|-Leu-15, 16-Tyr-|-Leu-17 and 24-Phe-|-Phe-25 bonds in insulin B chain.. With respect to regulation, inhibited by EDTA, 1,10 phenanthroline and batimastat (a peptidomimetic MMP inhibitor). Its function is as follows. Snake venom zinc metalloproteinase-disintegrin-like jararhagin: causes hemorrhage. This is the result of the degradation of sub-endothelial matrix proteins leading to the disruption of the blood vessel endothelium, with accompanying disturbances in platelet function. It is able to degrade von Willebrand factor (vWF) and it hydrolyzes the alpha-chain of fibrinogen (FGA) while leaving the beta and gamma chains unaffected. It inhibits collagen-induced platelet aggregation through the binding to alpha-2/beta-1 integrin (ITGA2/ITGB1) (collagen receptor), and it cleaves the beta-1 subunit of the same integrin, inhibiting platelet interaction and ultimately causing impairment of signal transduction. It has inability to be affected by the plasma inhibitor alpha(2)-macroglobulin. In fibroblasts, it functions as a collagen-mimetic substrate and, in endothelial cells, it causes apoptosis and indirectly inhibits cell proliferation by release of angiostatin-like compounds. It induces a strong pro-inflammatory response characterized by intense leukocyte accumulation and release of cytokines at the site of the injection. Although hemorrhage and edema are a response to the direct effect of this toxin, jararhagin-induced inflammation and necrosis are dependent on macrophages and key pro-inflammatory cytokines or their receptors. It also possesses anti-tumorgenic properties. In terms of biological role, the monomeric form inhibits collagen- and ADP-induced platelet aggregation, but has no effect on glycoprotein Ib-IX-dependent (GP1BA/GP5/GP9) platelet agglutination. Locally activates the early events of an acute inflammatory response as leukocyte rolling and pro-inflammatory cytokine release. Functionally, the dimeric form jaracetin may be a dimeric form of jararhagin-C. It binds to von Willebrand factor (VWF) and induces its interaction with GPIbalpha (GP1BA) (via the vWF A1 domain), resulting in platelet aggregation. Also binds the alpha-2 subunit of the alpha-2/beta-1 (ITGA2/ITGB1) integrin. It potently induces platelet aggregation in citrated platelet-rich plasma. The polypeptide is Zinc metalloproteinase-disintegrin-like jararhagin (Bothrops jararaca (Jararaca)).